The chain runs to 303 residues: 4-diphosphocytidyl-2-C-methyl-D-erythritol kinase (303 aa).

Lys-18 is an active-site residue. Residue 111-121 (PVASGIGGGSA) participates in ATP binding. The active site involves Asp-153.

It belongs to the GHMP kinase family. IspE subfamily.

The enzyme catalyses 4-CDP-2-C-methyl-D-erythritol + ATP = 4-CDP-2-C-methyl-D-erythritol 2-phosphate + ADP + H(+). It functions in the pathway isoprenoid biosynthesis; isopentenyl diphosphate biosynthesis via DXP pathway; isopentenyl diphosphate from 1-deoxy-D-xylulose 5-phosphate: step 3/6. Its function is as follows. Catalyzes the phosphorylation of the position 2 hydroxy group of 4-diphosphocytidyl-2C-methyl-D-erythritol. In Sinorhizobium medicae (strain WSM419) (Ensifer medicae), this protein is 4-diphosphocytidyl-2-C-methyl-D-erythritol kinase.